The sequence spans 331 residues: Ketol-acid reductoisomerase (NADP(+)) (331 aa).

A KARI N-terminal Rossmann domain is found at 2 to 182 (AKLFYDSDAD…GGTRAGILET (181 aa)). NADP(+) contacts are provided by residues 25 to 28 (YGSQ), serine 51, serine 53, and 83 to 86 (DEFQ). The active site involves histidine 108. Glycine 134 provides a ligand contact to NADP(+). Residues 183–328 (NFKEETETDL…KTLRSMFSWL (146 aa)) form the KARI C-terminal knotted domain. 4 residues coordinate Mg(2+): aspartate 191, glutamate 195, glutamate 227, and glutamate 231. Residue serine 252 coordinates substrate.

Belongs to the ketol-acid reductoisomerase family. It depends on Mg(2+) as a cofactor.

It catalyses the reaction (2R)-2,3-dihydroxy-3-methylbutanoate + NADP(+) = (2S)-2-acetolactate + NADPH + H(+). The enzyme catalyses (2R,3R)-2,3-dihydroxy-3-methylpentanoate + NADP(+) = (S)-2-ethyl-2-hydroxy-3-oxobutanoate + NADPH + H(+). It participates in amino-acid biosynthesis; L-isoleucine biosynthesis; L-isoleucine from 2-oxobutanoate: step 2/4. Its pathway is amino-acid biosynthesis; L-valine biosynthesis; L-valine from pyruvate: step 2/4. Its function is as follows. Involved in the biosynthesis of branched-chain amino acids (BCAA). Catalyzes an alkyl-migration followed by a ketol-acid reduction of (S)-2-acetolactate (S2AL) to yield (R)-2,3-dihydroxy-isovalerate. In the isomerase reaction, S2AL is rearranged via a Mg-dependent methyl migration to produce 3-hydroxy-3-methyl-2-ketobutyrate (HMKB). In the reductase reaction, this 2-ketoacid undergoes a metal-dependent reduction by NADPH to yield (R)-2,3-dihydroxy-isovalerate. This chain is Ketol-acid reductoisomerase (NADP(+)), found in Prochlorococcus marinus (strain NATL2A).